A 292-amino-acid chain; its full sequence is Bifunctional protein FolD (292 aa).

NADP(+) contacts are provided by residues 169 to 171, threonine 196, and valine 237; that span reads GRG.

Belongs to the tetrahydrofolate dehydrogenase/cyclohydrolase family. In terms of assembly, homodimer.

The catalysed reaction is (6R)-5,10-methylene-5,6,7,8-tetrahydrofolate + NADP(+) = (6R)-5,10-methenyltetrahydrofolate + NADPH. It catalyses the reaction (6R)-5,10-methenyltetrahydrofolate + H2O = (6R)-10-formyltetrahydrofolate + H(+). Its pathway is one-carbon metabolism; tetrahydrofolate interconversion. Functionally, catalyzes the oxidation of 5,10-methylenetetrahydrofolate to 5,10-methenyltetrahydrofolate and then the hydrolysis of 5,10-methenyltetrahydrofolate to 10-formyltetrahydrofolate. This Bifidobacterium longum (strain NCC 2705) protein is Bifunctional protein FolD.